A 477-amino-acid polypeptide reads, in one-letter code: MAQRYDELPHYGGMDGVGVPASMYGDPHAPRPIPPVHHLNHGPPLHATQHYGAHAPHPNVMPASMGSAVNDALKRDKDAIYGHPLFPLLALVFEKCELATCTPREPGVAGGDVCSSDSFNEDIAVFAKQVRAEKPLFSSNPELDNLMIQAIQVLRFHLLELEKVHELCDNFCHRYISCLKGKMPIDLVIDERDGSSKSDHEELSGSSTNLADHNPSSWRDHDDATSTHSAGTPGPSSGGHASQSGDNSSEQGDGLDNSVASPGTGDDDDPDKDKKRQKKRGIFPKVATNIMRAWLFQHLTHPYPSEEQKKQLAQDTGLTILQVNNWFINARRRIVQPMIDQSNRAGFLLDPSVSQGAAYSPEGQPMGSFVLDGQQHMGIRPAGLQSMPGDYVSQGGPMGMGMAQPSYTPPQMTPHPTQLRHGPPMHSYLPSHPHHPAMVMHGGPPTHPGMTMSAQSPTMLNSVDPNVGGQVMDIHAQ.

Residues 71–191 (DALKRDKDAI…KMPIDLVIDE (121 aa)) form a required for interaction with PBX1 region. The MEIS N-terminal domain occupies 110 to 193 (GGDVCSSDSF…PIDLVIDERD (84 aa)). Residues 193–203 (DGSSKSDHEEL) are compositionally biased toward basic and acidic residues. Residues 193-283 (DGSSKSDHEE…KKRQKKRGIF (91 aa)) are disordered. Composition is skewed to polar residues over residues 204-217 (SGSS…NPSS) and 239-251 (GHAS…SSEQ). Residues 276 to 338 (RQKKRGIFPK…NARRRIVQPM (63 aa)) constitute a DNA-binding region (homeobox; TALE-type). The interaction with DNA stretch occupies residues 299–333 (LTHPYPSEEQKKQLAQDTGLTILQVNNWFINARRR). Residues 340-477 (DQSNRAGFLL…GGQVMDIHAQ (138 aa)) are transcriptional activation domain.

This sequence belongs to the TALE/MEIS homeobox family. Monomer and homodimer. Heterodimer with HOXB13. Isoform Meis2A interacts with TLX1. Isoform Meis2B interacts with HOXA13 and PBX1 isoform PBX1b. Isoform Meis2D interacts with SP1, SP3 and KLF4. Isoform Meis2D interacts with PBX1 isoform PBX1a; the interaction partially relieves MEIS2 autoinhibition. Isoform Meis2B is part of a PDX1:PBX1b:MEIS2b complex; Meis2B is recruited by PBX1b and can be replaced by isoform Meis2D in a small fraction of complexes. Can form trimeric complexes including HOXB8 and PBX2 or PBX3. As to expression, displays spatially restricted expression patterns in the developing nervous system, limbs, face, and in various viscera. In adult, it is mainly expressed in the brain and female genital tract, with a different distribution of the alternative splice forms in these organs. Lower expression in lung and only basal level in heart, liver, kidney, spleen, and testis. Expressed in pancreatic islets (beta-cells only).

It localises to the nucleus. It is found in the cytoplasm. Its subcellular location is the perinuclear region. Its function is as follows. Involved in transcriptional regulation. Binds to HOX or PBX proteins to form dimers, or to a DNA-bound dimer of PBX and HOX proteins and thought to have a role in stabilization of the homeoprotein-DNA complex. Isoform Meis2B is required for the activity of a PDX1:PBX1b:MEIS2b complex in pancreatic acinar cells involved in the transcriptional activation of the ELA1 enhancer; the complex binds to the enhancer B element and cooperates with the transcription factor 1 complex (PTF1) bound to the enhancer A element; MEIS2 is not involved in complex DNA-binding. Probably in complex with PBX1, is involved in transcriptional regulation by KLF4. Isoforms Meis2B and Meis2D can bind to a EPHA8 promoter sequence containing the DNA motif 5'-CGGTCA-3'; in cooperation with a PBX protein (such as PBX2) is proposed to be involved in the transcriptional activation of EPHA8 in the developing midbrain. May be involved in regulation of myeloid differentiation. Can bind to the DNA sequence 5'-TGACAG-3'in the activator ACT sequence of the D(1A) dopamine receptor (DRD1) promoter and activate DRD1 transcription. In Mus musculus (Mouse), this protein is Homeobox protein Meis2 (Meis2).